The chain runs to 229 residues: uncharacterized protein (229 aa).

Residues 102 to 217 form the PilZ domain; that stretch reads RRRTVRVEPD…REKVRRYVFE (116 aa).

The protein to A.aeolicus aq_820 and aq_1211.

This is an uncharacterized protein from Aquifex aeolicus (strain VF5).